Here is a 421-residue protein sequence, read N- to C-terminus: Vinorine synthase (421 aa).

Catalysis depends on proton acceptor residues H160 and D362.

The protein belongs to the plant acyltransferase family. Monomer. As to expression, mainly expressed in roots and, to a lower level, in leaves.

It catalyses the reaction 16-epivellosimine + acetyl-CoA = vinorine + CoA. It functions in the pathway alkaloid biosynthesis; ajmaline biosynthesis. Its activity is regulated as follows. Complete inhibition by 4-(2-aminoethyl)-benzenesulfonyl fluoride (AEBSF), N-tosyl-L-phenylalanine chloromethylketone (TPCK), Hg(2+) and diethyl-pyrocarbonate (DEPC). 50% inhibition by N-(N-(L-3-trans-carboxirane-2-carbonyl)-L-leucyl)-agmanitine (E-64), N-alpha-p-tosyl-L-lysine chloromethylketone (TLCK) and phenylmethylsulfonyl fluoride (PMSF). Functionally, acetyltransferase involved in the biosynthesis of ajmaline-type monoterpenoid indole alkaloids (MIAs) natural products, important plant-derived pharmaceuticals used in the therapy of heart disorders. Catalyzes the conversion of 16-epivellosimine to vinorine, precursor of vomilenine, an intermediate chemical in the biosynthesis of ajmaline. Acts on gardneral, but not on polyneuridine aldehyde or N-methylgardneral. In Rauvolfia serpentina (Serpentine wood), this protein is Vinorine synthase.